The following is a 202-amino-acid chain: Protein phosphatase 1 regulatory subunit 1B (202 aa).

Position 1 is an N-acetylmethionine (M1). A disordered region spans residues 1 to 202 (MDPKDRKKIQ…QRPAHPEPGT (202 aa)). Phosphothreonine; by PKA is present on T34. The segment covering 41-63 (LSEHSSPEEEASPHQRASGEGHH) has biased composition (basic and acidic residues). A phosphoserine mark is found at S45 and S46. A Phosphothreonine; by CDK5 modification is found at T75. A compositionally biased stretch (polar residues) spans 89–100 (HLQSISNLGENQ). The residue at position 102 (S102) is a Phosphoserine. Residues 109 to 118 (GELRELGYPR) show a composition bias toward basic and acidic residues. Acidic residues predominate over residues 119-136 (EEEEEEEEEDEEEEEDSQ). S135 bears the Phosphoserine mark. Over residues 191–202 (EPQRPAHPEPGT) the composition is skewed to basic and acidic residues.

Belongs to the protein phosphatase inhibitor 1 family. Dopamine- and cyclic AMP-regulated neuronal phosphoprotein. In terms of processing, phosphorylation of Thr-34 is required for activity.

Its subcellular location is the cytoplasm. Inhibitor of protein-phosphatase 1. The sequence is that of Protein phosphatase 1 regulatory subunit 1B (PPP1R1B) from Bos taurus (Bovine).